We begin with the raw amino-acid sequence, 561 residues long: Putative transport protein YbjL (561 aa).

5 consecutive transmembrane segments (helical) span residues 8–28 (LLNGNYILLLFVVLTLGLCLG), 32–52 (LGSIQLGNSIGVLVVSLLLGQ), 66–86 (FMLFIFCVGVEAGPNFFSIFF), 94–114 (MLALVMVGSALVIALGLGKLF), and 158–178 (NLSLGYALTYLIGLVSLIVGA). 2 consecutive RCK C-terminal domains span residues 200-288 (RGLD…SFRN) and 292-373 (VFDR…RIGF). The next 5 helical transmembrane spans lie at 383–403 (LLAFCAFFVIGLMIGMITFQF), 406–426 (FSFGMGNAAGLLFAGIMLGFM), 451–471 (VFMAGVGLSAGSGINNGLGAI), 475–495 (MLIAGLIVSLVPVVICFLFGA), and 540–560 (AIANVLLTLAGTIIVMVWPGL).

The protein belongs to the AAE transporter (TC 2.A.81) family. YbjL subfamily.

Its subcellular location is the cell membrane. The sequence is that of Putative transport protein YbjL from Shigella sonnei (strain Ss046).